The primary structure comprises 643 residues: Chromosomal replication initiator protein DnaA (643 aa).

A domain I, interacts with DnaA modulators region spans residues 1 to 97; the sequence is MADVPADLAA…VDDSAGEPPP (97 aa). The interval 87–303 is disordered; it reads TVDDSAGEPP…ASGPGEPTAR (217 aa). A domain II region spans residues 97–302; sequence PAAPPAQQTP…PASGPGEPTA (206 aa). The span at 195 to 209 shows a compositional bias: polar residues; that stretch reads SPSSQDAYGSPSQDY. Positions 222–269 are enriched in basic and acidic residues; sequence QRGDYDTPRAEYEPARPDYDSARPDYESARPEYDQRDPVRRELPEPPA. Low complexity predominate over residues 291-300; the sequence is PAPASGPGEP. The domain III, AAA+ region stretch occupies residues 303 to 519; that stretch reads RLNPKYLFDT…GALIRVTAFA (217 aa). Residues glycine 347, glycine 349, lysine 350, and threonine 351 each contribute to the ATP site. Positions 520–643 are domain IV, binds dsDNA; it reads SLNRQPVDLG…TELTNRIKNG (124 aa).

Belongs to the DnaA family. As to quaternary structure, oligomerizes as a right-handed, spiral filament on DNA at oriC.

The protein localises to the cytoplasm. Functionally, plays an essential role in the initiation and regulation of chromosomal replication. ATP-DnaA binds to the origin of replication (oriC) to initiate formation of the DNA replication initiation complex once per cell cycle. Binds the DnaA box (a 9 base pair repeat at the origin) and separates the double-stranded (ds)DNA. Forms a right-handed helical filament on oriC DNA; dsDNA binds to the exterior of the filament while single-stranded (ss)DNA is stabiized in the filament's interior. The ATP-DnaA-oriC complex binds and stabilizes one strand of the AT-rich DNA unwinding element (DUE), permitting loading of DNA polymerase. After initiation quickly degrades to an ADP-DnaA complex that is not apt for DNA replication. Binds acidic phospholipids. The polypeptide is Chromosomal replication initiator protein DnaA (Streptomyces reticuli).